The chain runs to 367 residues: Flagellar P-ring protein (367 aa).

The first 24 residues, 1-24 (MLRPIITLLCLTLMLCTAAGPAGA), serve as a signal peptide directing secretion.

Belongs to the FlgI family. The basal body constitutes a major portion of the flagellar organelle and consists of four rings (L,P,S, and M) mounted on a central rod.

The protein resides in the periplasm. Its subcellular location is the bacterial flagellum basal body. In terms of biological role, assembles around the rod to form the L-ring and probably protects the motor/basal body from shearing forces during rotation. This chain is Flagellar P-ring protein, found in Syntrophotalea carbinolica (strain DSM 2380 / NBRC 103641 / GraBd1) (Pelobacter carbinolicus).